Here is a 122-residue protein sequence, read N- to C-terminus: Small ribosomal subunit protein bS16 (122 aa).

The interval A87–A122 is disordered. Positions R103–A122 are enriched in low complexity.

This sequence belongs to the bacterial ribosomal protein bS16 family.

This Methylocella silvestris (strain DSM 15510 / CIP 108128 / LMG 27833 / NCIMB 13906 / BL2) protein is Small ribosomal subunit protein bS16.